Reading from the N-terminus, the 159-residue chain is Outer envelope pore protein 16-3, chloroplastic/mitochondrial (159 aa).

An N-acetylmethionine modification is found at Met-1. The tract at residues 1-65 (MDPAEMRYLE…IRTLKMMGTH (65 aa)) is contains beta strands. The next 3 membrane-spanning stretches (helical) occupy residues 24-40 (ITGF…LATW), 62-79 (MGTH…YIGV), and 92-109 (FYNG…VLGY).

It belongs to the Tim17/Tim22/Tim23 family. Plastid outer envelope porin OEP16 (TC 1.B.30) subfamily. Homodimer and oligomers in membrane. Part of both the NADH-ubiquinone oxidoreductase complex I and of the TIM17:23 complex. Interacts with TIM23-2.

It is found in the plastid. The protein localises to the chloroplast outer membrane. Its subcellular location is the mitochondrion outer membrane. It localises to the mitochondrion inner membrane. Functionally, voltage-dependent high-conductance channel with a slight cation-selectivity; selective for amino acids but excludes triosephosphates or uncharged sugars. Non-essential amino acid-selective channel protein and translocation pore for NADPH:protochlorophyllide oxidoreductase A (PORA) and possibly PORB. This is Outer envelope pore protein 16-3, chloroplastic/mitochondrial (OEP163) from Arabidopsis thaliana (Mouse-ear cress).